The primary structure comprises 78 residues: uncharacterized protein (78 aa).

Transmembrane regions (helical) follow at residues 20 to 40 (SVYF…WLVV) and 57 to 77 (LLMD…ILIA).

Its subcellular location is the cell membrane. This is an uncharacterized protein from Escherichia coli (strain K12).